The sequence spans 104 residues: L-rhamnose mutarotase (104 aa).

Tyr-18 lines the substrate pocket. His-22 (proton donor) is an active-site residue. Substrate contacts are provided by residues Tyr-41 and 76-77 (WW). Residues 85-104 (PSNPDNSPISDALDPVFYLD) are disordered.

Belongs to the rhamnose mutarotase family. As to quaternary structure, homodimer.

The protein resides in the cytoplasm. It catalyses the reaction alpha-L-rhamnose = beta-L-rhamnose. It functions in the pathway carbohydrate metabolism; L-rhamnose metabolism. Involved in the anomeric conversion of L-rhamnose. This is L-rhamnose mutarotase from Pectobacterium atrosepticum (strain SCRI 1043 / ATCC BAA-672) (Erwinia carotovora subsp. atroseptica).